The sequence spans 326 residues: Target of rapamycin complex subunit LST8 (326 aa).

An N-acetylmethionine modification is found at Met1. WD repeat units lie at residues 1-37, 40-80, 83-122, 126-165, and 168-207; these read MNTT…CTRT, HQDS…PIIS, GVSK…LQCQ, QVNA…NEQL, and EPES…GDDV. Thr51 is modified (phosphothreonine). Lys86 is covalently cross-linked (Glycyl lysine isopeptide (Lys-Gly) (interchain with G-Cter in SUMO3)). Glycyl lysine isopeptide (Lys-Gly) (interchain with G-Cter in SUMO3) cross-links involve residues Lys215, Lys245, and Lys261. One copy of the WD 6 repeat lies at 218-257; sequence AHTRYALQCRFSPDSTLLATCSADQTCKIWRTSNFSLMTE. Residues 268 to 309 form a WD 7 repeat; it reads SSRGWMWGCAFSGDSQYIVTASSDNLARLWCVETGEIKREYG. A Glycyl lysine isopeptide (Lys-Gly) (interchain with G-Cter in SUMO3); alternate cross-link involves residue Lys305. Glycyl lysine isopeptide (Lys-Gly) (interchain with G-Cter in ubiquitin); alternate cross-links involve residues Lys305 and Lys313. Residue Lys313 forms a Glycyl lysine isopeptide (Lys-Gly) (interchain with G-Cter in SUMO1); alternate linkage.

The protein belongs to the WD repeat LST8 family. Part of the mechanistic target of rapamycin complex 1 (mTORC1) which contains MTOR, MLST8 and RPTOR. mTORC1 associates with AKT1S1/PRAS40, which inhibits its activity. mTORC1 binds to and is inhibited by FKBP12-rapamycin. Within mTORC1, interacts directly with MTOR and RPTOR. Component of the mechanistic target of rapamycin complex 2 (mTORC2), consisting in two heterotretramers composed of MTOR, MLST8, RICTOR and MAPKAP1/SIN1. Contrary to mTORC1, mTORC2 does not bind to and is not sensitive to FKBP12-rapamycin. mTORC1 and mTORC2 associate with DEPTOR, which regulates their activity. Interacts with RHEB. Interacts with MEAK7. Interacts with SIK3. Interacts with SLC38A7; this interaction promotes the recruitment of mTORC1 to the lysosome and its subsequent activation. Phosphorylation at Thr-51 by CDK1 promotes ubiquitination by the SCF(FBXW7) complex, followed by degradation. Post-translationally, ubiquitination by the SCF(FBXW7) and SCF(FBXW11) complexes following phosphorylation at Thr-51 by CDK1, leads to its degradation by the proteasome. Ubiquitination at Lys-305 and Lys-313 by TRAF2 via 'Lys-63'-linked polyubiquitin chains inhibits formation of the mTORC2 complex, while promoting formation of the mTORC1 complex: ubiquitination disrupts the interaction between MLST8 and MAPKAP1/SIN1 to favor mTORC1 assembly. Deubiquitination at Lys-305 and Lys-313 by OTUD7B promotes MLST8 interaction with MAPKAP1/SIN1, facilitating mTORC2 assembly. In terms of processing, sumoylation with SUMO1, SUMO2 and SUMO3 promotes assembly of both mTORC1 and mTORC2 complexes.

It localises to the lysosome membrane. The protein localises to the cytoplasm. Its function is as follows. Subunit of both mTORC1 and mTORC2, which regulates cell growth and survival in response to nutrient and hormonal signals. mTORC1 is activated in response to growth factors or amino acids. In response to nutrients, mTORC1 is recruited to the lysosome membrane and promotes protein, lipid and nucleotide synthesis by phosphorylating several substrates, such as ribosomal protein S6 kinase (RPS6KB1 and RPS6KB2) and EIF4EBP1 (4E-BP1). In the same time, it inhibits catabolic pathways by phosphorylating the autophagy initiation components ULK1 and ATG13, as well as transcription factor TFEB, a master regulators of lysosomal biogenesis and autophagy. The mTORC1 complex is inhibited in response to starvation and amino acid depletion. Within mTORC1, MLST8 interacts directly with MTOR and enhances its kinase activity. In nutrient-poor conditions, stabilizes the MTOR-RPTOR interaction and favors RPTOR-mediated inhibition of MTOR activity. As part of the mTORC2 complex, transduces signals from growth factors to pathways involved in proliferation, cytoskeletal organization, lipogenesis and anabolic output. mTORC2 is also activated by growth factors, but seems to be nutrient-insensitive. In response to growth factors, mTORC2 phosphorylates and activates AGC protein kinase family members, including AKT (AKT1, AKT2 and AKT3), PKC (PRKCA, PRKCB and PRKCE) and SGK1. mTORC2 functions upstream of Rho GTPases to regulate the actin cytoskeleton, probably by activating one or more Rho-type guanine nucleotide exchange factors. mTORC2 promotes the serum-induced formation of stress-fibers or F-actin. mTORC2 plays a critical role in AKT1 activation by mediating phosphorylation of different sites depending on the context, such as 'Thr-450', 'Ser-473', 'Ser-477' or 'Thr-479', facilitating the phosphorylation of the activation loop of AKT1 on 'Thr-308' by PDPK1/PDK1 which is a prerequisite for full activation. mTORC2 regulates the phosphorylation of SGK1 at 'Ser-422'. mTORC2 also modulates the phosphorylation of PRKCA on 'Ser-657'. Within mTORC2, MLST8 acts as a bridge between MAPKAP1/SIN1 and MTOR. The chain is Target of rapamycin complex subunit LST8 from Mus musculus (Mouse).